Consider the following 743-residue polypeptide: MSNRVVDVNSKKTGTSWKKKLMKIVIWSLAMLSFIAGLVLLGLVAAATISGSKNLPTAEYKWAGCENLGKCQIDGFSTPPLVILSFDGFAKEYLERRIVKSLELIAECGVKADRVYPSFPSKTFPNHYTMVTGLYPESHGITDNYVFDPNLYPELLAMRKHEAKEFYQAEPIWSAYKRLTGNRVHCLFWVGCYYNITGYMPDVSPDYNQELPLKERIDTLIGWLKLPETERPALITAYLHEPDQAGHMQKNVNQELEEVNNYIDILMKALHDENLLECVNLVIVSDHGMQALNNSIEVETIVNMDGLVLSKGVVARIHLNETDRSIDEVAGEIRCKIDGVKVNTINDIPLRKHYSKSKRVGDIIIEGKPGTSFYKSETNLGDHGYDYHNENMHTVMFARGPSFLQNVTVPSFQNVQYMNLWLYLLGLEGTVDNNGTIGFFDSILKNPPIRENKWDSMEECLNFGSAEVLQCDKAEGHDLKKLSLHLENCKEHQNLPIYSKNNCFQSYCENSLIIHKNRQDVRKGVIESLTFSFSRNQSVFENSFSFVNTKYSIECPKLDTKDNFFTAGSEAISKLANAQYKFPSSFMKSELISSLLSLKDETIKFVDIWVPLSIKTDEYLKHYGKLFVLSGLAVDRNLDGIADDEESKEPTHFYRILITCTGNWLSTNPPLCKKYSDTKALAFVFPILNKKTTMDCMDSDAILLDYTSTIEDVENIASFQFQIGALSHQQNVYLRRNITTSLW.

The Cytoplasmic segment spans residues 1–23 (MSNRVVDVNSKKTGTSWKKKLMK). Residues 24-44 (IVIWSLAMLSFIAGLVLLGLV) traverse the membrane as a helical; Signal-anchor for type II membrane protein segment. Topologically, residues 45-743 (AAATISGSKN…LRRNITTSLW (699 aa)) are lumenal. Zn(2+) contacts are provided by D87 and T123. Residue T123 is the Nucleophile of the active site. N-linked (GlcNAc...) asparagine glycosylation is present at N195. Zn(2+) is bound by residues D243, H247, D286, and H287. 2 N-linked (GlcNAc...) asparagine glycosylation sites follow: N293 and N320. H383 lines the Zn(2+) pocket. N-linked (GlcNAc...) asparagine glycans are attached at residues N406, N434, and N536. Ca(2+) is bound by residues D635, N637, D639, I641, and D643. An N-linked (GlcNAc...) asparagine glycan is attached at N737.

It belongs to the nucleotide pyrophosphatase/phosphodiesterase family. Zn(2+) is required as a cofactor. The cofactor is Ca(2+).

It localises to the membrane. In terms of biological role, probable phosphodiesterase. The protein is Ectonucleotide pyrophosphatase/phosphodiesterase C27A7.3 of Caenorhabditis elegans.